Here is a 350-residue protein sequence, read N- to C-terminus: Glycerol-1-phosphate dehydrogenase [NAD(P)+] (350 aa).

NAD(+) contacts are provided by residues 97-101 and 119-122; these read GSIID and TTAS. A substrate-binding site is contributed by Asp124. Ser128 provides a ligand contact to NAD(+). Substrate is bound at residue Asp171. Residues Asp171 and His251 each contribute to the Zn(2+) site. Substrate is bound at residue His255. Residue His267 coordinates Zn(2+).

It belongs to the glycerol-1-phosphate dehydrogenase family. Zn(2+) is required as a cofactor.

Its subcellular location is the cytoplasm. It carries out the reaction sn-glycerol 1-phosphate + NAD(+) = dihydroxyacetone phosphate + NADH + H(+). The enzyme catalyses sn-glycerol 1-phosphate + NADP(+) = dihydroxyacetone phosphate + NADPH + H(+). It functions in the pathway membrane lipid metabolism; glycerophospholipid metabolism. Functionally, catalyzes the NAD(P)H-dependent reduction of dihydroxyacetonephosphate (DHAP or glycerone phosphate) to glycerol 1-phosphate (G1P). The G1P thus generated is used as the glycerophosphate backbone of phospholipids in the cellular membranes of Archaea. This is Glycerol-1-phosphate dehydrogenase [NAD(P)+] from Thermococcus sibiricus (strain DSM 12597 / MM 739).